Consider the following 294-residue polypeptide: Putative inactive magnesium transporter MRS2-8 (294 aa).

A coiled-coil region spans residues 179-216 (KLKSSMTRLTAQVQKIKDELEQLLEDDEDMAELYLSRK).

Belongs to the CorA metal ion transporter (MIT) (TC 1.A.35.5) family.

This Arabidopsis thaliana (Mouse-ear cress) protein is Putative inactive magnesium transporter MRS2-8 (MRS2-8).